A 600-amino-acid chain; its full sequence is Terpenoid synthase 8 (600 aa).

D352, D356, N497, and D505 together coordinate Mg(2+). The DDXXD motif motif lies at 352–356; the sequence is DDTCD.

The protein belongs to the terpene synthase family. Tpsa subfamily. It depends on Mg(2+) as a cofactor. Mn(2+) is required as a cofactor. Stele, and tips of primary and secondary root.

The protein resides in the plastid. The catalysed reaction is (2E,6E,10E)-geranylgeranyl diphosphate = rhizathalene A + diphosphate. It functions in the pathway secondary metabolite biosynthesis; terpenoid biosynthesis. In terms of biological role, catalyzes the synthesis of the semivolatile diterpene rhizatalene A. This is Terpenoid synthase 8 (TPS08) from Arabidopsis thaliana (Mouse-ear cress).